Here is a 179-residue protein sequence, read N- to C-terminus: Photosystem I assembly protein Ycf3 (179 aa).

TPR repeat units follow at residues 29–62 (AFSY…EEDP), 66–99 (SYTL…NSNL), and 126–159 (NLEI…APDN).

It belongs to the Ycf3 family.

The protein localises to the plastid. Its subcellular location is the chloroplast thylakoid membrane. Its function is as follows. Essential for the assembly of the photosystem I (PSI) complex. May act as a chaperone-like factor to guide the assembly of the PSI subunits. The chain is Photosystem I assembly protein Ycf3 from Trieres chinensis (Marine centric diatom).